The following is a 125-amino-acid chain: Photosystem I reaction center subunit IV, chloroplastic (125 aa).

The transit peptide at 1-34 (MASIASSVAVRLGLTQVLPNKNFSSPRSTRLVVR) directs the protein to the chloroplast. Low complexity predominate over residues 42–57 (APAAASPEGEAPKAAA). The disordered stretch occupies residues 42-68 (APAAASPEGEAPKAAAKPPPIGPKRGS).

The protein belongs to the PsaE family.

Its subcellular location is the plastid. It localises to the chloroplast thylakoid membrane. Stabilizes the interaction between PsaC and the PSI core, assists the docking of the ferredoxin to PSI and interacts with ferredoxin-NADP oxidoreductase. This is Photosystem I reaction center subunit IV, chloroplastic (PSAE-1) from Spinacia oleracea (Spinach).